Consider the following 135-residue polypeptide: D-ribose pyranase (135 aa).

Histidine 20 functions as the Proton donor in the catalytic mechanism. Substrate-binding positions include aspartate 28, histidine 102, and 124–126 (YSN).

It belongs to the RbsD / FucU family. RbsD subfamily. Homodecamer.

The protein localises to the cytoplasm. The enzyme catalyses beta-D-ribopyranose = beta-D-ribofuranose. It participates in carbohydrate metabolism; D-ribose degradation; D-ribose 5-phosphate from beta-D-ribopyranose: step 1/2. Functionally, catalyzes the interconversion of beta-pyran and beta-furan forms of D-ribose. In Thermotoga maritima (strain ATCC 43589 / DSM 3109 / JCM 10099 / NBRC 100826 / MSB8), this protein is D-ribose pyranase.